Here is a 678-residue protein sequence, read N- to C-terminus: Platelet endothelial cell adhesion molecule (678 aa).

The first 17 residues, 1 to 17 (MLLALLLTMLLYASLQA), serve as a signal peptide directing secretion. The Extracellular segment spans residues 18–589 (QENSFTINSI…VRVFLAPWKK (572 aa)). Ig-like C2-type domains follow at residues 40 to 126 (GQKL…PEVT), 135 to 213 (GGIV…FIRS), 225 to 309 (PKFQ…ILVN), 315 to 391 (PRPK…LVPV), 413 to 472 (GQII…NCHS), and 488 to 577 (PVDE…RSGP). The cysteines at positions 47 and 99 are disulfide-linked. N74 and N141 each carry an N-linked (GlcNAc...) asparagine glycan. Intrachain disulfides connect C142–C195 and C245–C293. Residues N309, N345, N360, N424, and N540 are each glycosylated (N-linked (GlcNAc...) asparagine). Cystine bridges form between C336–C375, C420–C465, and C512–C561. The chain crosses the membrane as a helical span at residues 590-610 (GLIAVVVIGVVIAALIVAAKY). The Cytoplasmic portion of the chain corresponds to 611–678 (YFLRKAKAKQ…EPHQENGRLP (68 aa)). The interval 634–653 (NSNSEKVSEPSVETNSHYDS) is disordered. The ITIM motif motif lies at 658 to 663 (VEYTEV). Y660 carries the post-translational modification Phosphotyrosine; by FER.

Trans-homodimer (via Ig-like C2-type 1 and Ig-like C2-type 2 domains); trans-homodimerization is required for cell-cell interaction. Forms a complex with BDKRB2 and GNAQ. Interacts with BDKRB2 and GNAQ. Interacts with PTPN11. Interacts with FER. Interacts with CD177; the interaction is Ca(2+)-dependent; the interaction is direct. Post-translationally, phosphorylated on Ser and Tyr residues after cellular activation. In endothelial cells Fyn mediates mechanical-force (stretch or pull) induced tyrosine phosphorylation. Phosphorylated on tyrosine residues by FER and FES in response to FCER1 activation. Palmitoylation by ZDHHC21 is necessary for cell surface expression in endothelial cells and enrichment in membrane rafts.

Its subcellular location is the cell membrane. It is found in the membrane raft. The protein localises to the cell junction. Its function is as follows. Cell adhesion molecule which is required for leukocyte transendothelial migration (TEM) under most inflammatory conditions. Tyr-660 plays a critical role in TEM and is required for efficient trafficking of PECAM1 to and from the lateral border recycling compartment (LBRC) and is also essential for the LBRC membrane to be targeted around migrating leukocytes. Trans-homophilic interaction may play a role in endothelial cell-cell adhesion via cell junctions. Heterophilic interaction with CD177 plays a role in transendothelial migration of neutrophils. Homophilic ligation of PECAM1 prevents macrophage-mediated phagocytosis of neighboring viable leukocytes by transmitting a detachment signal. Promotes macrophage-mediated phagocytosis of apoptotic leukocytes by tethering them to the phagocytic cells; PECAM1-mediated detachment signal appears to be disabled in apoptotic leukocytes. Modulates bradykinin receptor BDKRB2 activation. Regulates bradykinin- and hyperosmotic shock-induced ERK1/2 activation in endothelial cells. Induces susceptibility to atherosclerosis. In Rattus norvegicus (Rat), this protein is Platelet endothelial cell adhesion molecule (Pecam1).